Reading from the N-terminus, the 484-residue chain is Regulator of G-protein signaling 9 (484 aa).

The 76-residue stretch at Pro-30–Thr-105 folds into the DEP domain. The region spanning Val-219–Leu-280 is the G protein gamma domain. Residues Asn-299 to Leu-414 form the RGS domain. The segment at Thr-460–Lys-484 is disordered. Residues Lys-470–Lys-484 show a composition bias toward basic and acidic residues.

In terms of assembly, heterodimer with GNB5. Interacts with RGS7BP, leading to regulate the subcellular location of the heterodimer formed with GNB5. Component of the RGS9-1-Gbeta5 complex composed of RGS9 (RGS9-1), Gbeta5 (GNB5) and RGS9BP. Interacts with PDE6G and GNAT1. Post-translationally, phosphorylation is decreased by light exposition. Photoreceptor outer segments.

The protein resides in the membrane. In terms of biological role, inhibits signal transduction by increasing the GTPase activity of G protein alpha subunits thereby driving them into their inactive GDP-bound form. Binds to GNAT1. Involved in phototransduction; key element in the recovery phase of visual transduction. In Bos taurus (Bovine), this protein is Regulator of G-protein signaling 9 (RGS9).